A 343-amino-acid polypeptide reads, in one-letter code: Dihydroorotase (343 aa).

The Zn(2+) site is built by H13 and H15. Substrate contacts are provided by residues 15 to 17 (HFR) and N41. Positions 98, 135, and 173 each coordinate Zn(2+). The residue at position 98 (K98) is an N6-carboxylysine. Substrate is bound at residue H135. Position 218 (L218) interacts with substrate. D246 is a Zn(2+) binding site. D246 is a catalytic residue. 2 residues coordinate substrate: H250 and A262.

It belongs to the metallo-dependent hydrolases superfamily. DHOase family. Class II DHOase subfamily. Homodimer. Zn(2+) serves as cofactor.

The enzyme catalyses (S)-dihydroorotate + H2O = N-carbamoyl-L-aspartate + H(+). The protein operates within pyrimidine metabolism; UMP biosynthesis via de novo pathway; (S)-dihydroorotate from bicarbonate: step 3/3. In terms of biological role, catalyzes the reversible cyclization of carbamoyl aspartate to dihydroorotate. This is Dihydroorotase from Marinomonas sp. (strain MWYL1).